The chain runs to 116 residues: Large ribosomal subunit protein bL17 (116 aa).

It belongs to the bacterial ribosomal protein bL17 family. In terms of assembly, part of the 50S ribosomal subunit. Contacts protein L32.

The protein is Large ribosomal subunit protein bL17 of Sulfurimonas denitrificans (strain ATCC 33889 / DSM 1251) (Thiomicrospira denitrificans (strain ATCC 33889 / DSM 1251)).